Reading from the N-terminus, the 421-residue chain is Enolase (421 aa).

The active-site Proton donor is the E207. Residues D244, E285, and D312 each coordinate Mg(2+). The active-site Proton acceptor is K337. (2R)-2-phosphoglycerate contacts are provided by K337, R366, S367, and K388.

The protein belongs to the enolase family. It depends on Mg(2+) as a cofactor.

Its subcellular location is the cytoplasm. The protein resides in the secreted. It localises to the cell surface. The catalysed reaction is (2R)-2-phosphoglycerate = phosphoenolpyruvate + H2O. It functions in the pathway carbohydrate degradation; glycolysis; pyruvate from D-glyceraldehyde 3-phosphate: step 4/5. In terms of biological role, catalyzes the reversible conversion of 2-phosphoglycerate (2-PG) into phosphoenolpyruvate (PEP). It is essential for the degradation of carbohydrates via glycolysis. This is Enolase from Ehrlichia ruminantium (strain Gardel).